The primary structure comprises 439 residues: Histone acetyltransferase ESA1 (439 aa).

The 51-residue stretch at 23–73 (VGCKSWVLKDGQDRLAEILSINSRRDPPKFYVHYEDFNKRLDEWITADRLQ) folds into the Tudor-knot domain. The segment at 83–120 (PKELEEKKDSKKKKQQQNKSATPQAASATPDGGDVMDL) is disordered. Residues 156–427 (ARVRNLNKVI…IDPQKLIWTP (272 aa)) enclose the MYST-type HAT domain. Residues 189-214 (VYIDDFSLQYFGSKKQYERYRKKCTL) form a C2HC MYST-type; degenerate zinc finger. Residues 239-260 (RTWCRNLCLLSKLFLDHKTLYY) carry the ESA1-RPD3 motif motif. Position 256 is an N6-acetyllysine; by autocatalysis (Lys256). Residues 297 to 301 (ACILT) and 306 to 312 (QRMGYGR) each bind acetyl-CoA. Glu332 functions as the Proton donor/acceptor in the catalytic mechanism. An acetyl-CoA-binding site is contributed by Ser336.

The protein belongs to the MYST (SAS/MOZ) family. Component of the NuA4 histone acetyltransferase complex. Post-translationally, autoacetylation at Lys-256 is required for proper function.

It is found in the nucleus. It localises to the chromosome. The enzyme catalyses L-lysyl-[histone] + acetyl-CoA = N(6)-acetyl-L-lysyl-[histone] + CoA + H(+). It carries out the reaction L-lysyl-[protein] + acetyl-CoA = N(6)-acetyl-L-lysyl-[protein] + CoA + H(+). The catalysed reaction is 2-hydroxyisobutanoyl-CoA + L-lysyl-[protein] = N(6)-(2-hydroxyisobutanoyl)-L-lysyl-[protein] + CoA + H(+). It catalyses the reaction (2E)-butenoyl-CoA + L-lysyl-[protein] = N(6)-(2E)-butenoyl-L-lysyl-[protein] + CoA + H(+). In terms of biological role, catalytic component of the NuA4 histone acetyltransferase (HAT) complex which is involved in epigenetic transcriptional activation of selected genes principally by acetylation of nucleosomal histones H4, H3, H2B, H2A and H2A variant H2A.Z. Acetylates histone H4 to form H4K5ac, H4K8ac, H4K12ac and H4K16ac, histone H3 to form H3K14ac, and histone H2A to form H2AK4ac and H2AK7ac. The NuA4 complex is involved in the DNA damage response and is required for chromosome segregation. The NuA4 complex plays a direct role in repair of DNA double-strand breaks (DSBs) through homologous recombination. Recruitment to promoters depends on H3K4me. Also acetylates non-histone proteins. In addition to protein acetyltransferase, can use different acyl-CoA substrates, such as 2-hydroxyisobutanoyl-CoA (2-hydroxyisobutyryl-CoA) or (2E)-butenoyl-CoA (crotonyl-CoA), and is able to mediate protein 2-hydroxyisobutyrylation and crotonylation, respectively. This chain is Histone acetyltransferase ESA1 (ESA1), found in Kluyveromyces lactis (strain ATCC 8585 / CBS 2359 / DSM 70799 / NBRC 1267 / NRRL Y-1140 / WM37) (Yeast).